We begin with the raw amino-acid sequence, 150 residues long: Ribonuclease H (150 aa).

Residues 1–141 (MKSIEVHTDG…VDVLARNQAI (141 aa)) form the RNase H type-1 domain. Asp-9, Glu-47, Asp-69, and Asp-133 together coordinate Mg(2+).

It belongs to the RNase H family. In terms of assembly, monomer. Mg(2+) is required as a cofactor.

It localises to the cytoplasm. It carries out the reaction Endonucleolytic cleavage to 5'-phosphomonoester.. Functionally, endonuclease that specifically degrades the RNA of RNA-DNA hybrids. The protein is Ribonuclease H of Xanthomonas campestris pv. campestris (strain 8004).